A 211-amino-acid chain; its full sequence is MNNRFIVVEGLDGSGKTTIVHKIVKYFYNQKITNVITTHEPGGTEIAYILSELIKNKSKNEKLTDLSELLMLYAARSQLLENVIKPALFKGDWVIGDRCDLSSFAYQGAGRKLNSVLLNMLSQYVINDFFPKLIFYLDIPSELVLSRIKNRKVLDRIEQESLSFFNRVRSYYRKLAFLKENIIMIDASQPLEQVCVFIYRYLDQWLCDLYK.

Residue 10–17 coordinates ATP; that stretch reads GLDGSGKT.

It belongs to the thymidylate kinase family.

The catalysed reaction is dTMP + ATP = dTDP + ADP. In terms of biological role, phosphorylation of dTMP to form dTDP in both de novo and salvage pathways of dTTP synthesis. In Blochmanniella floridana, this protein is Thymidylate kinase.